Consider the following 134-residue polypeptide: Profilin-1 (134 aa).

A disulfide bond links Cys13 and Cys118. The short motif at 84–100 (AVIRGKKGSGGITIKKT) is the Involved in PIP2 interaction element. At Thr114 the chain carries Phosphothreonine.

The protein belongs to the profilin family. Occurs in many kinds of cells as a complex with monomeric actin in a 1:1 ratio. In terms of processing, phosphorylated by MAP kinases.

The protein resides in the cytoplasm. It is found in the cytoskeleton. Functionally, binds to actin and affects the structure of the cytoskeleton. At high concentrations, profilin prevents the polymerization of actin, whereas it enhances it at low concentrations. By binding to PIP2, it inhibits the formation of IP3 and DG. The polypeptide is Profilin-1 (PRO1) (Olea europaea (Common olive)).